A 112-amino-acid polypeptide reads, in one-letter code: Large ribosomal subunit protein uL22 (112 aa).

It belongs to the universal ribosomal protein uL22 family. Part of the 50S ribosomal subunit.

Its function is as follows. This protein binds specifically to 23S rRNA; its binding is stimulated by other ribosomal proteins, e.g. L4, L17, and L20. It is important during the early stages of 50S assembly. It makes multiple contacts with different domains of the 23S rRNA in the assembled 50S subunit and ribosome. The globular domain of the protein is located near the polypeptide exit tunnel on the outside of the subunit, while an extended beta-hairpin is found that lines the wall of the exit tunnel in the center of the 70S ribosome. The chain is Large ribosomal subunit protein uL22 from Caldanaerobacter subterraneus subsp. tengcongensis (strain DSM 15242 / JCM 11007 / NBRC 100824 / MB4) (Thermoanaerobacter tengcongensis).